We begin with the raw amino-acid sequence, 534 residues long: Probable alkaline/neutral invertase D (534 aa).

Phosphoserine is present on residues Ser7 and Ser37. Thr55 is modified (phosphothreonine). Ser532 is subject to Phosphoserine.

It belongs to the glycosyl hydrolase 100 family.

It carries out the reaction Hydrolysis of terminal non-reducing beta-D-fructofuranoside residues in beta-D-fructofuranosides.. Functionally, invertase that cleaves sucrose into glucose and fructose. The protein is Probable alkaline/neutral invertase D of Arabidopsis thaliana (Mouse-ear cress).